The following is a 132-amino-acid chain: Small ribosomal subunit protein uS8c (132 aa).

The protein belongs to the universal ribosomal protein uS8 family. Part of the 30S ribosomal subunit.

The protein resides in the plastid. The protein localises to the chloroplast. In terms of biological role, one of the primary rRNA binding proteins, it binds directly to 16S rRNA central domain where it helps coordinate assembly of the platform of the 30S subunit. This chain is Small ribosomal subunit protein uS8c (rps8), found in Adiantum capillus-veneris (Maidenhair fern).